The following is a 483-amino-acid chain: ATP synthase subunit beta (483 aa).

169–176 (GGAGVGKT) serves as a coordination point for ATP.

Belongs to the ATPase alpha/beta chains family. F-type ATPases have 2 components, CF(1) - the catalytic core - and CF(0) - the membrane proton channel. CF(1) has five subunits: alpha(3), beta(3), gamma(1), delta(1), epsilon(1). CF(0) has three main subunits: a(1), b(2) and c(9-12). The alpha and beta chains form an alternating ring which encloses part of the gamma chain. CF(1) is attached to CF(0) by a central stalk formed by the gamma and epsilon chains, while a peripheral stalk is formed by the delta and b chains.

Its subcellular location is the cell membrane. The catalysed reaction is ATP + H2O + 4 H(+)(in) = ADP + phosphate + 5 H(+)(out). Functionally, produces ATP from ADP in the presence of a proton gradient across the membrane. The catalytic sites are hosted primarily by the beta subunits. This Corynebacterium glutamicum (strain ATCC 13032 / DSM 20300 / JCM 1318 / BCRC 11384 / CCUG 27702 / LMG 3730 / NBRC 12168 / NCIMB 10025 / NRRL B-2784 / 534) protein is ATP synthase subunit beta.